A 169-amino-acid polypeptide reads, in one-letter code: Large ribosomal subunit protein bL9 (169 aa).

Belongs to the bacterial ribosomal protein bL9 family.

Functionally, binds to the 23S rRNA. This Chlamydia pneumoniae (Chlamydophila pneumoniae) protein is Large ribosomal subunit protein bL9.